The primary structure comprises 146 residues: Hemoglobin subunit beta (146 aa).

Val1 is modified (N-acetylvaline). One can recognise a Globin domain in the interval 2–146 (HLSGEEKAAV…VANALAHKYH (145 aa)). Thr12 bears the Phosphothreonine mark. Ser44 bears the Phosphoserine mark. Position 59 is an N6-acetyllysine (Lys59). His63 is a heme b binding site. Lys82 is modified (N6-acetyllysine). Heme b is bound at residue His92. The residue at position 93 (Cys93) is an S-nitrosocysteine. Position 144 is an N6-acetyllysine (Lys144).

This sequence belongs to the globin family. In terms of assembly, heterotetramer of two alpha chains and two beta chains. In terms of tissue distribution, red blood cells.

Involved in oxygen transport from the lung to the various peripheral tissues. This chain is Hemoglobin subunit beta (HBB), found in Pteropus alecto (Black flying fox).